Reading from the N-terminus, the 87-residue chain is Cell division topological specificity factor (87 aa).

This sequence belongs to the MinE family.

In terms of biological role, prevents the cell division inhibition by proteins MinC and MinD at internal division sites while permitting inhibition at polar sites. This ensures cell division at the proper site by restricting the formation of a division septum at the midpoint of the long axis of the cell. The protein is Cell division topological specificity factor of Blochmanniella pennsylvanica (strain BPEN).